A 432-amino-acid polypeptide reads, in one-letter code: Ribosome biogenesis protein WDR12 homolog (432 aa).

Residues 13–97 form a ubiquitin-like (UBL) domain region; that stretch reads LQIRLVALNK…ESVIEVVYFQ (85 aa). 7 WD repeats span residues 109 to 146, 148 to 190, 197 to 236, 265 to 303, 305 to 345, 352 to 392, and 396 to 432; these read LHSDWIKSVRSKDDCILAGSLDGTARIWNMAGEEYAIF, GHES…KSVE, GHTQAVNAVTVNQSKTKICSVSSDKMIKIWSTDCSRKDDD, GHTDGIDAVVWPKEAEIITAGWDHRIKIWDTEVGVNKSD, NVNK…DQTV, SHKN…APLY, and GHEDKVLAVDWSEPQYIVSGGADNRIQIYQREVAQRS.

The protein belongs to the WD repeat WDR12/YTM1 family.

It is found in the nucleus. It localises to the nucleolus. The protein resides in the nucleoplasm. Functionally, required for maturation of ribosomal RNAs and formation of the large ribosomal subunit. This is Ribosome biogenesis protein WDR12 homolog from Trichoplax adhaerens (Trichoplax reptans).